A 72-amino-acid polypeptide reads, in one-letter code: MSKDDSIEFEGSVSETLPNTTFRVKLENGYEIIAHISGRMRKNYIRILTGDRVKVEMTPYDLTKGRITYRMK.

Positions 1–72 (MSKDDSIEFE…TKGRITYRMK (72 aa)) constitute an S1-like domain.

The protein belongs to the IF-1 family. Component of the 30S ribosomal translation pre-initiation complex which assembles on the 30S ribosome in the order IF-2 and IF-3, IF-1 and N-formylmethionyl-tRNA(fMet); mRNA recruitment can occur at any time during PIC assembly.

The protein localises to the cytoplasm. One of the essential components for the initiation of protein synthesis. Stabilizes the binding of IF-2 and IF-3 on the 30S subunit to which N-formylmethionyl-tRNA(fMet) subsequently binds. Helps modulate mRNA selection, yielding the 30S pre-initiation complex (PIC). Upon addition of the 50S ribosomal subunit IF-1, IF-2 and IF-3 are released leaving the mature 70S translation initiation complex. The polypeptide is Translation initiation factor IF-1 (Xanthomonas campestris pv. campestris (strain 8004)).